The following is a 222-amino-acid chain: Thiopurine S-methyltransferase (222 aa).

S-adenosyl-L-methionine-binding residues include W10, L45, E66, and R126.

This sequence belongs to the class I-like SAM-binding methyltransferase superfamily. TPMT family.

Its subcellular location is the cytoplasm. It catalyses the reaction S-adenosyl-L-methionine + a thiopurine = S-adenosyl-L-homocysteine + a thiopurine S-methylether.. This chain is Thiopurine S-methyltransferase, found in Shewanella piezotolerans (strain WP3 / JCM 13877).